An 863-amino-acid polypeptide reads, in one-letter code: Oleate activated transcription factor 3 (863 aa).

The segment at residues Cys-19–Cys-47 is a DNA-binding region (zn(2)-C6 fungal-type). The span at Asp-52–Leu-63 shows a compositional bias: polar residues. The disordered stretch occupies residues Asp-52–Trp-99.

Belongs to the OAF3 family.

Its subcellular location is the cytoplasm. The protein localises to the nucleus. The protein resides in the mitochondrion. Functionally, transcriptional inhibitor with a significantly increased number of target genes in response to oleate. This is Oleate activated transcription factor 3 (OAF3) from Saccharomyces cerevisiae (strain YJM789) (Baker's yeast).